The primary structure comprises 250 residues: Large ribosomal subunit protein uL4 (250 aa).

Disordered regions lie at residues 1-20 (MQVT…DLPR) and 51-101 (YAGL…HGLD). Over residues 92 to 101 (PKAEKDHGLD) the composition is skewed to basic and acidic residues.

It belongs to the universal ribosomal protein uL4 family. As to quaternary structure, part of the 50S ribosomal subunit.

Its function is as follows. One of the primary rRNA binding proteins, this protein initially binds near the 5'-end of the 23S rRNA. It is important during the early stages of 50S assembly. It makes multiple contacts with different domains of the 23S rRNA in the assembled 50S subunit and ribosome. Functionally, forms part of the polypeptide exit tunnel. This Halobacterium salinarum (strain ATCC 29341 / DSM 671 / R1) protein is Large ribosomal subunit protein uL4.